Reading from the N-terminus, the 799-residue chain is Sodium- and chloride-dependent glycine transporter 2 (799 aa).

Residues 1–64 are disordered; it reads MDCSAPKEMN…RSASTGAQTF (64 aa). Residues 1–201 lie on the Cytoplasmic side of the membrane; that stretch reads MDCSAPKEMN…ARGNWSSKLD (201 aa). Low complexity predominate over residues 40-57; that stretch reads PAAAPAAAVQPPRVPRSA. Position 58 is a phosphoserine (serine 58). A Phosphothreonine modification is found at threonine 59. Serine 86 carries the post-translational modification Phosphoserine. Helical transmembrane passes span 202–222, 230–249, and 273–293; these read FILSMVGYAVGLGNVWRFPYL, AFLIPYLMMLALAGLPIFFL, and GCGIAMLIISVLIAIYYNVII. Positions 208, 210, 211, and 215 each coordinate Na(+). The Extracellular portion of the chain corresponds to 294–395; sequence CYTLFYLFAS…AGIEYPGEIR (102 aa). A disulfide bridge connects residues cysteine 313 and cysteine 322. Asparagine 345, asparagine 355, asparagine 360, and asparagine 366 each carry an N-linked (GlcNAc...) asparagine glycan. Helical transmembrane passes span 396-414, 423-440, 476-493, 505-526, and 559-578; these read WPLAFCLFLAWVIVYASLA, VVYFTATFPYVVLVILLI, IFFSLSAAWGGLITLSSY, LIVTCTNSATSIFAGFVIFSVI, and LPLSPFWAIIFFLMLLTLGL. 4 residues coordinate Na(+): serine 479, asparagine 511, leucine 576, and aspartate 579. Helical transmembrane passes span 606–624, 640–660, 681–700, and 719–737; these read VFTLGCCICFFIMGFPMIT, SYALVIIAIFELVGISYVYGL, VCWAFVTPTILTFILCFSFY, and LGWLMLACSVIWIPIMFVI. Over 738-799 the chain is Cytoplasmic; it reads KMYLAPGRFI…VKDLELGTQC (62 aa).

The protein belongs to the sodium:neurotransmitter symporter (SNF) (TC 2.A.22) family. SLC6A5 subfamily. In terms of processing, N-glycosylated. As to expression, specifically expressed in spinal cord, brain stem, and to a lesser extent in the cerebellum.

The protein resides in the cell membrane. It carries out the reaction glycine(out) + chloride(out) + 3 Na(+)(out) = glycine(in) + chloride(in) + 3 Na(+)(in). Sodium- and chloride-dependent glycine transporter. Terminates the action of glycine by its high affinity sodium-dependent reuptake into presynaptic terminals. May be responsible for the termination of neurotransmission at strychnine-sensitive glycinergic synapses. This chain is Sodium- and chloride-dependent glycine transporter 2 (Slc6a5), found in Rattus norvegicus (Rat).